The following is a 391-amino-acid chain: Bifunctional enzyme IspD/IspF (391 aa).

The 2-C-methyl-D-erythritol 4-phosphate cytidylyltransferase stretch occupies residues 1-230; it reads MLAAGRGKRA…KKKMQMFPDI (230 aa). Positions 231–391 are 2-C-methyl-D-erythritol 2,4-cyclodiphosphate synthase; that stretch reads RTGNGYDVHS…TVLYPGEIPK (161 aa). Residues aspartate 237 and histidine 239 each coordinate a divalent metal cation. Residues 237–239 and 263–264 each bind 4-CDP-2-C-methyl-D-erythritol 2-phosphate; these read DVH and HS. A divalent metal cation is bound at residue histidine 271. 4-CDP-2-C-methyl-D-erythritol 2-phosphate is bound by residues 285–287, 361–364, phenylalanine 368, and arginine 371; these read DIG and TTNE.

This sequence in the N-terminal section; belongs to the IspD/TarI cytidylyltransferase family. IspD subfamily. In the C-terminal section; belongs to the IspF family. The cofactor is a divalent metal cation.

The enzyme catalyses 2-C-methyl-D-erythritol 4-phosphate + CTP + H(+) = 4-CDP-2-C-methyl-D-erythritol + diphosphate. It carries out the reaction 4-CDP-2-C-methyl-D-erythritol 2-phosphate = 2-C-methyl-D-erythritol 2,4-cyclic diphosphate + CMP. It functions in the pathway isoprenoid biosynthesis; isopentenyl diphosphate biosynthesis via DXP pathway; isopentenyl diphosphate from 1-deoxy-D-xylulose 5-phosphate: step 2/6. The protein operates within isoprenoid biosynthesis; isopentenyl diphosphate biosynthesis via DXP pathway; isopentenyl diphosphate from 1-deoxy-D-xylulose 5-phosphate: step 4/6. Bifunctional enzyme that catalyzes the formation of 4-diphosphocytidyl-2-C-methyl-D-erythritol from CTP and 2-C-methyl-D-erythritol 4-phosphate (MEP) (IspD), and catalyzes the conversion of 4-diphosphocytidyl-2-C-methyl-D-erythritol 2-phosphate (CDP-ME2P) to 2-C-methyl-D-erythritol 2,4-cyclodiphosphate (ME-CPP) with a corresponding release of cytidine 5-monophosphate (CMP) (IspF). The sequence is that of Bifunctional enzyme IspD/IspF from Bartonella quintana (strain Toulouse) (Rochalimaea quintana).